A 534-amino-acid polypeptide reads, in one-letter code: 5,6-dihydroxyindole-2-carboxylic acid oxidase (534 aa).

Residues 1-23 form the signal peptide; it reads MLGPATFLPLTAALLLLIPGGRA. At 24–477 the chain is on the lumenal, melanosome side; that stretch reads QFPRQCVTPE…WPSRALNFTE (454 aa). 5 disulfide bridges follow: Cys29/Cys40, Cys41/Cys65, Cys56/Cys99, Cys101/Cys110, and Cys113/Cys122. Residues Asn96 and Asn104 are each glycosylated (N-linked (GlcNAc...) asparagine). N-linked (GlcNAc...) asparagine glycans are attached at residues Asn175 and Asn181. 3 residues coordinate Zn(2+): His192, His215, and His224. 2 disulfide bridges follow: Cys258/Cys261 and Cys290/Cys303. N-linked (GlcNAc...) asparagine glycans are attached at residues Asn304 and Asn350. Positions 377 and 381 each coordinate Zn(2+). The N-linked (GlcNAc...) asparagine glycan is linked to Asn385. His404 contacts Zn(2+). A helical transmembrane segment spans residues 478–501; that stretch reads IITIAVVAALVLVAVIFAAASCAV. Residues 502 to 534 are Cytoplasmic-facing; that stretch reads HRSRKDDVHQPLLGEQYPRYSEEYERDASQSAV.

This sequence belongs to the tyrosinase family. Requires Cu(2+) as cofactor. Zn(2+) is required as a cofactor.

It is found in the melanosome membrane. It carries out the reaction 2 5,6-dihydroxyindole-2-carboxylate + O2 = 2 indole-5,6-quinone-2-carboxylate + 2 H2O. It functions in the pathway pigment biosynthesis; melanin biosynthesis. Functionally, plays a role in melanin biosynthesis. Catalyzes the oxidation of 5,6-dihydroxyindole-2-carboxylic acid (DHICA) into indole-5,6-quinone-2-carboxylic acid. May regulate or influence the type of melanin synthesized. Also to a lower extent, capable of hydroxylating tyrosine and producing melanin. This chain is 5,6-dihydroxyindole-2-carboxylic acid oxidase (TYRP1), found in Ambystoma mexicanum (Axolotl).